The primary structure comprises 217 residues: Segregation and condensation protein B (217 aa).

The protein belongs to the ScpB family. Homodimer. Homodimerization may be required to stabilize the binding of ScpA to the Smc head domains. Component of a cohesin-like complex composed of ScpA, ScpB and the Smc homodimer, in which ScpA and ScpB bind to the head domain of Smc. The presence of the three proteins is required for the association of the complex with DNA.

It localises to the cytoplasm. Functionally, participates in chromosomal partition during cell division. May act via the formation of a condensin-like complex containing Smc and ScpA that pull DNA away from mid-cell into both cell halves. This is Segregation and condensation protein B from Geobacillus kaustophilus (strain HTA426).